A 302-amino-acid chain; its full sequence is Diacetylchitobiose uptake system permease protein NgcG (302 aa).

The next 6 membrane-spanning stretches (helical) occupy residues 40-60 (LLIL…MSSF), 99-119 (VIVV…CAYV), 131-151 (IYYV…VPLF), 166-186 (LILT…YSFF), 221-241 (AAVA…PVAL), and 268-288 (GALF…YCVF). Positions 95–288 (FLNSVIVVVS…VPVLLVYCVF (194 aa)) constitute an ABC transmembrane type-1 domain.

This sequence belongs to the binding-protein-dependent transport system permease family. In terms of assembly, the complex is composed of two ATP-binding proteins (MsiK), two transmembrane proteins (NgcF and NgcG) and a solute-binding protein (NgcE).

The protein resides in the cell membrane. In terms of biological role, part of the ABC transporter complex NgcEFG-MsiK involved in N,N'-diacetylchitobiose ((GlcNAc)2) uptake. Responsible for the translocation of the substrate across the membrane. This is Diacetylchitobiose uptake system permease protein NgcG from Streptomyces coelicolor (strain ATCC BAA-471 / A3(2) / M145).